The following is an 862-amino-acid chain: Valine--tRNA ligase (862 aa).

A 'HIGH' region motif is present at residues 43-53 (PNVTGSLHMGH). Positions 176, 179, 344, 347, 417, 420, 438, and 441 each coordinate Zn(2+). The short motif at 528-532 (KMSKS) is the 'KMSKS' region element. Lys531 contributes to the ATP binding site. Positions 802 to 862 (RRRQEKRLKE…RIREALSQIG (61 aa)) form a coiled coil.

It belongs to the class-I aminoacyl-tRNA synthetase family. ValS type 1 subfamily. Monomer. Zn(2+) is required as a cofactor.

It is found in the cytoplasm. The catalysed reaction is tRNA(Val) + L-valine + ATP = L-valyl-tRNA(Val) + AMP + diphosphate. Its function is as follows. Catalyzes the attachment of valine to tRNA(Val). As ValRS can inadvertently accommodate and process structurally similar amino acids such as threonine, to avoid such errors, it has a 'posttransfer' editing activity that hydrolyzes mischarged Thr-tRNA(Val) in a tRNA-dependent manner. This is Valine--tRNA ligase from Thermus thermophilus (strain ATCC BAA-163 / DSM 7039 / HB27).